Reading from the N-terminus, the 342-residue chain is Putative aryl-alcohol dehydrogenase AAD16 (342 aa).

Belongs to the aldo/keto reductase family. Aldo/keto reductase 2 subfamily.

Functionally, putative aryl-alcohol dehydrogenase. In Saccharomyces cerevisiae (strain ATCC 204508 / S288c) (Baker's yeast), this protein is Putative aryl-alcohol dehydrogenase AAD16.